Reading from the N-terminus, the 291-residue chain is N-acetylmannosamine kinase (291 aa).

ATP-binding positions include 5-12 and 132-139; these read AIDIGGTK and GVGGGVVC. 4 residues coordinate Zn(2+): histidine 156, cysteine 166, cysteine 168, and cysteine 173.

Belongs to the ROK (NagC/XylR) family. NanK subfamily. Homodimer.

It catalyses the reaction an N-acyl-D-mannosamine + ATP = an N-acyl-D-mannosamine 6-phosphate + ADP + H(+). It functions in the pathway amino-sugar metabolism; N-acetylneuraminate degradation; D-fructose 6-phosphate from N-acetylneuraminate: step 2/5. In terms of biological role, catalyzes the phosphorylation of N-acetylmannosamine (ManNAc) to ManNAc-6-P. This chain is N-acetylmannosamine kinase, found in Salmonella agona (strain SL483).